We begin with the raw amino-acid sequence, 203 residues long: ATP-dependent Clp protease proteolytic subunit (203 aa).

The Nucleophile role is filled by S107. H132 is a catalytic residue.

This sequence belongs to the peptidase S14 family. As to quaternary structure, fourteen ClpP subunits assemble into 2 heptameric rings which stack back to back to give a disk-like structure with a central cavity, resembling the structure of eukaryotic proteasomes.

It localises to the cytoplasm. The enzyme catalyses Hydrolysis of proteins to small peptides in the presence of ATP and magnesium. alpha-casein is the usual test substrate. In the absence of ATP, only oligopeptides shorter than five residues are hydrolyzed (such as succinyl-Leu-Tyr-|-NHMec, and Leu-Tyr-Leu-|-Tyr-Trp, in which cleavage of the -Tyr-|-Leu- and -Tyr-|-Trp bonds also occurs).. Its function is as follows. Cleaves peptides in various proteins in a process that requires ATP hydrolysis. Has a chymotrypsin-like activity. Plays a major role in the degradation of misfolded proteins. This is ATP-dependent Clp protease proteolytic subunit from Pelagibacter ubique (strain HTCC1062).